Reading from the N-terminus, the 132-residue chain is Small ribosomal subunit protein uS8c (132 aa).

Belongs to the universal ribosomal protein uS8 family. As to quaternary structure, part of the 30S ribosomal subunit.

It localises to the plastid. Its subcellular location is the chloroplast. In terms of biological role, one of the primary rRNA binding proteins, it binds directly to 16S rRNA central domain where it helps coordinate assembly of the platform of the 30S subunit. This chain is Small ribosomal subunit protein uS8c (rps8), found in Cycas taitungensis (Prince sago).